The following is a 461-amino-acid chain: Cysteine--tRNA ligase (461 aa).

Cys-28 lines the Zn(2+) pocket. The 'HIGH' region motif lies at 30-40; sequence ITVYDLCHIGH. Cys-209, His-234, and Glu-238 together coordinate Zn(2+). The short motif at 266-270 is the 'KMSKS' region element; sequence KMSKS. Lys-269 is a binding site for ATP.

The protein belongs to the class-I aminoacyl-tRNA synthetase family. As to quaternary structure, monomer. Requires Zn(2+) as cofactor.

The protein resides in the cytoplasm. It carries out the reaction tRNA(Cys) + L-cysteine + ATP = L-cysteinyl-tRNA(Cys) + AMP + diphosphate. In Shigella boydii serotype 18 (strain CDC 3083-94 / BS512), this protein is Cysteine--tRNA ligase.